The sequence spans 126 residues: Protein ApaG (126 aa).

Positions 2 to 126 (TELETSIKID…FRLSIPGLLH (125 aa)) constitute an ApaG domain.

The protein is Protein ApaG of Shewanella woodyi (strain ATCC 51908 / MS32).